A 25-amino-acid chain; its full sequence is Css54 (25 aa).

In terms of tissue distribution, expressed by the venom gland.

It is found in the secreted. The protein resides in the target cell membrane. Functionally, amphipathic peptide that shows antibacterial activity against E.coli (MIC=12.5 ug/ml) and S.aureus (MIC=12.5 ug/ml). Has hemolytic activity against human erythrocytes (25 uM provokes 83% of hemolysis). May act by disrupting the integrity of the bacterial cell membrane. Increases efficacy of antibiotics (ethambutol, pyrazinamide, isoniazid, rifampicin) when tested against S.aureus, probably by facilitating their incorporation into the bacteria. The chain is Css54 from Centruroides suffusus (Durango bark scorpion).